The primary structure comprises 123 residues: T-complex protein 1 subunit alpha (123 aa).

Residue Gly68 participates in ADP binding.

It belongs to the TCP-1 chaperonin family. Component of the chaperonin-containing T-complex (TRiC), a hexadecamer composed of two identical back-to-back stacked rings enclosing a protein folding chamber. Each ring is made up of eight different subunits: TCP1/CCT1, CCT2, CCT3, CCT4, CCT5, CCT6A/CCT6, CCT7, CCT8. Interacts with PACRG. Interacts with GBA1. Interacts with DLEC1.

Its subcellular location is the cytoplasm. The protein localises to the cytosol. It is found in the cytoskeleton. The protein resides in the microtubule organizing center. It localises to the centrosome. The enzyme catalyses ATP + H2O = ADP + phosphate + H(+). Functionally, component of the chaperonin-containing T-complex (TRiC), a molecular chaperone complex that assists the folding of actin, tubulin and other proteins upon ATP hydrolysis. The TRiC complex mediates the folding of WRAP53/TCAB1, thereby regulating telomere maintenance. As part of the TRiC complex may play a role in the assembly of BBSome, a complex involved in ciliogenesis regulating transports vesicles to the cilia. This chain is T-complex protein 1 subunit alpha, found in Mesocricetus auratus (Golden hamster).